The following is a 122-amino-acid chain: MIQPQTLLNVADNSGARELMCIRIIGASNRRYAHIGDVIVAVIKKAVPNTPLERSEVIRAVIVRTCKELKRENGMIIRYDDNAAVVIDQEGNPKGTRIFGAIARELRQLNFTKIISLAPEVL.

It belongs to the universal ribosomal protein uL14 family. As to quaternary structure, part of the 50S ribosomal subunit.

The protein localises to the plastid. Its subcellular location is the chloroplast. In terms of biological role, binds to 23S rRNA. In Cucumis sativus (Cucumber), this protein is Large ribosomal subunit protein uL14c.